Consider the following 68-residue polypeptide: Palustrin-1c (68 aa).

Residues 1 to 22 (MFTMKKSLLLLFFLGTISLSLC) form the signal peptide. Residues 23 to 39 (EEERGADEEEGDGEKLT) constitute a propeptide that is removed on maturation. The cysteines at positions 62 and 68 are disulfide-linked.

As to expression, expressed by the skin glands.

It localises to the secreted. In terms of biological role, antimicrobial peptide. This is Palustrin-1c from Odorrana versabilis (Chinese bamboo leaf odorous frog).